The following is a 219-amino-acid chain: Glycosylphosphatidylinositol anchor biosynthesis protein 11 (219 aa).

The Cytoplasmic segment spans residues 1–45 (MPAKKRTRKTVKKTVSFSDDTTLTTHQNREKKNVDHDRPPVYVRK). Phosphoserine is present on serine 16. The helical transmembrane segment at 46–66 (TPLMTFPYHLVALLYYYVFVS) threads the bilayer. Position 67 (serine 67) is a topological domain, lumenal. A helical transmembrane segment spans residues 68 to 88 (NFNTVKLLSFLIPTQVAYLVL). Topologically, residues 89–108 (QFNKCTVYGNKIIKINYSLT) are cytoplasmic. The chain crosses the membrane as a helical span at residues 109–129 (IICLGVTFLLSFPTMLLTILF). At 130–135 (GAPLMD) the chain is on the lumenal side. A helical transmembrane segment spans residues 136-156 (LLWETWLLSLHFAFLAYPAVY). Over 157–170 (SVFNCDFKVGLWKK) the chain is Cytoplasmic. Residues 171 to 191 (YFIFIVVGGWISCVVIPLDWD) traverse the membrane as a helical segment. Residues 192-198 (RDWQNWP) lie on the Lumenal side of the membrane. A helical membrane pass occupies residues 199–217 (IPIVVGGYLGALVGYTIGA). Over 218–219 (YI) the chain is Cytoplasmic.

It belongs to the PIGF family.

The protein localises to the endoplasmic reticulum membrane. The protein operates within glycolipid biosynthesis; glycosylphosphatidylinositol-anchor biosynthesis. Its function is as follows. Acts in the GPI biosynthetic pathway between GlcNAc-PI synthesis and GPI transfer to protein. Required for the formation of complete GPI precursors CP1 and CP2. The chain is Glycosylphosphatidylinositol anchor biosynthesis protein 11 (GPI11) from Saccharomyces cerevisiae (strain ATCC 204508 / S288c) (Baker's yeast).